The sequence spans 294 residues: Ethylene-inducing xylanase 3 (294 aa).

The first 19 residues, 1 to 19 (MVCFSSLFVAASAIAGVFA), serve as a signal peptide directing secretion. A GH11 domain is found at 31–226 (QSTPSSQGTH…SSGSARINVA (196 aa)). E122 functions as the Nucleophile in the catalytic mechanism. E213 (proton donor) is an active-site residue. Positions 259–294 (SCAARWGQCGGSGWNGATCCSAGTCQAQNQWYSQCL) constitute a CBM1 domain.

The protein belongs to the glycosyl hydrolase 11 (cellulase G) family.

The catalysed reaction is Endohydrolysis of (1-&gt;4)-beta-D-xylosidic linkages in xylans.. It participates in glycan degradation; xylan degradation. In terms of biological role, endo-1,4-beta-xylanase involved in the hydrolysis of xylan, a major structural heterogeneous polysaccharide found in plant biomass representing the second most abundant polysaccharide in the biosphere, after cellulose. Exhibits immunity-inducing activity in Nicotiana benthamiana. Can induce strong oxidative burst, activate the expression of defense-related genes, and increase resistance against oomycete and fungal pathogens in N.benthamiana. This is Ethylene-inducing xylanase 3 from Verticillium dahliae (strain VdLs.17 / ATCC MYA-4575 / FGSC 10137) (Verticillium wilt).